Reading from the N-terminus, the 431-residue chain is Urokinase-type plasminogen activator (431 aa).

Residues 1-20 (MRALLARLLLCVLVVSDSKG) form the signal peptide. The EGF-like domain maps to 27–63 (VPSNCDCLNGGTCVSNKYFSNIHWCNCPKKFGGQHCE). Intrachain disulfides connect cysteine 31–cysteine 39, cysteine 33–cysteine 51, cysteine 53–cysteine 62, cysteine 70–cysteine 151, cysteine 91–cysteine 133, and cysteine 122–cysteine 146. Positions 34–57 (LNGGTCVSNKYFSNIHWCNCPKKF) are binds urokinase plasminogen activator surface receptor. The Kringle domain maps to 69–151 (TCYEGNGHFY…LVQECMVHDC (83 aa)). The connecting peptide stretch occupies residues 152–178 (ADGKKPSSPPEELKFQCGQKTLRPRFK). Serine 158 bears the Phosphoserine mark. Disulfide bonds link cysteine 168-cysteine 299, cysteine 209-cysteine 225, cysteine 217-cysteine 288, cysteine 313-cysteine 382, cysteine 345-cysteine 361, and cysteine 372-cysteine 400. One can recognise a Peptidase S1 domain in the interval 179–424 (IVGGEFTTIE…FLPWIRSHTK (246 aa)). Active-site charge relay system residues include histidine 224 and aspartate 275. Asparagine 322 carries an N-linked (GlcNAc...) asparagine glycan. Serine 323 is modified (phosphoserine). Catalysis depends on serine 376, which acts as the Charge relay system.

This sequence belongs to the peptidase S1 family. As to quaternary structure, found in high and low molecular mass forms. Each consists of two chains, A and B. The high molecular mass form contains a long chain A which is cleaved to yield a short chain A. Forms heterodimer with SERPINA5. Binds LRP1B; binding is followed by internalization and degradation. Interacts with MRC2. Interacts with PLAUR. In complex with SERPINE1, interacts with PLAUR/uPAR. Interacts with SORL1 and LRP1, either alone or in complex with SERPINE1; these interactions are abolished in the presence of LRPAP1/RAP. The ternary complex composed of PLAUR-PLAU-PAI1 also interacts with SORLA. In terms of processing, phosphorylation of Ser-158 and Ser-323 abolishes proadhesive ability but does not interfere with receptor binding. Post-translationally, produced as an inactive single-chain protein (pro-uPA or sc-uPA), is processed into the active disulfide-linked two-chain form of PLAU/uPA by a proteolytic event mediated, at least, by TMPRSS4.

It localises to the secreted. It carries out the reaction Specific cleavage of Arg-|-Val bond in plasminogen to form plasmin.. With respect to regulation, inhibited by SERPINA5. Inhibited by SERPINE1. Specifically cleaves the zymogen plasminogen to form the active enzyme plasmin. This Pongo abelii (Sumatran orangutan) protein is Urokinase-type plasminogen activator (PLAU).